A 489-amino-acid polypeptide reads, in one-letter code: 5-hydroxytryptamine receptor 3A (489 aa).

The first 23 residues, 1–23, serve as a signal peptide directing secretion; sequence MRLCIPQVLLALFLSMLTAPGEG. Residues 24-246 lie on the Extracellular side of the membrane; the sequence is SRRRATQARD…MKFYVIIRRR (223 aa). N-linked (GlcNAc...) asparagine glycans are attached at residues Asn-109, Asn-175, and Asn-191. A disulfide bridge connects residues Cys-162 and Cys-176. Residues 247-273 traverse the membrane as a helical segment; the sequence is PLFYAVSLLLPSIFLMVVDIVGFCLPP. Over 274–278 the chain is Cytoplasmic; that stretch reads DSGER. A helical membrane pass occupies residues 279-297; sequence VSFKITLLLGYSVFLIIVS. Residues 298 to 307 lie on the Extracellular side of the membrane; sequence DTLPATAIGT. Residues 308–326 traverse the membrane as a helical segment; sequence PLIGVYFVVCMALLVISLA. Topologically, residues 327 to 466 are cytoplasmic; that stretch reads ETIFIVRLVH…GYVLDRLLFR (140 aa). An HA-stretch; determines single-channel conductance in 5-HT3 receptors region spans residues 425–461; that stretch reads AVRGLLQELSSIRHFLEKRDEMREVARDWLRVGYVLD. The helical transmembrane segment at 467-486 threads the bilayer; the sequence is IYLLAVLAYSITLVTLWSIW. Residues 487-489 lie on the Extracellular side of the membrane; sequence HYS.

The protein belongs to the ligand-gated ion channel (TC 1.A.9) family. 5-hydroxytryptamine receptor (TC 1.A.9.2) subfamily. HTR3A sub-subfamily. As to quaternary structure, forms homopentameric as well as heteropentameric serotonin-activated cation-selective channel complexes with HTR3B or HTR3C or HTR3D or HTR3E. The homomeric complex is functional but exhibits low conductance with modified voltage dependence, and decreased agonist and antagonist affinity. Heteropentameric complexes display properties which resemble that of neuronal serotonin-activated channels in vivo. Interacts with RIC3. In terms of tissue distribution, brain, spinal cord, and heart.

It is found in the postsynaptic cell membrane. It localises to the cell membrane. It catalyses the reaction Na(+)(in) = Na(+)(out). It carries out the reaction K(+)(in) = K(+)(out). The enzyme catalyses Ca(2+)(in) = Ca(2+)(out). The catalysed reaction is Mg(2+)(in) = Mg(2+)(out). In terms of biological role, forms serotonin (5-hydroxytryptamine/5-HT3)-activated cation-selective channel complexes, which when activated cause fast, depolarizing responses in neurons. This chain is 5-hydroxytryptamine receptor 3A, found in Mus musculus (Mouse).